Consider the following 380-residue polypeptide: Glutamine synthetase, chloroplastic (380 aa).

Residues 35 to 125 enclose the GS beta-grasp domain; it reads MAAEYIWADG…VMCEVFAPDG (91 aa). The 249-residue stretch at 132–380 folds into the GS catalytic domain; it reads TRAKLREIID…RLLIKTVLKG (249 aa).

It belongs to the glutamine synthetase family. As to quaternary structure, homooctamer.

Its subcellular location is the plastid. The protein resides in the chloroplast. It carries out the reaction L-glutamate + NH4(+) + ATP = L-glutamine + ADP + phosphate + H(+). The protein is Glutamine synthetase, chloroplastic (GLN2) of Chlamydomonas reinhardtii (Chlamydomonas smithii).